Here is a 218-residue protein sequence, read N- to C-terminus: uncharacterized protein (218 aa).

Transmembrane regions (helical) follow at residues 28–48 (ILLFALSILGIGDGLIVLSGL), 66–86 (FDIGWSSFLISCAVMLVWKPL), 92–112 (LGTLLNIIVIALFLGITTKIL), 122–142 (MIFCLIGILLYGFGTALYLTC), and 173–193 (ISVCLLGFLLGGVVGLGTVLF).

It localises to the cell membrane. This is an uncharacterized protein from Haemophilus influenzae (strain ATCC 51907 / DSM 11121 / KW20 / Rd).